A 349-amino-acid polypeptide reads, in one-letter code: Glycine-rich cell wall structural protein (349 aa).

The first 23 residues, Met-1–Cys-23, serve as a signal peptide directing secretion.

It is found in the secreted. Its subcellular location is the cell wall. Responsible for plasticity of the cell wall. This Arabidopsis thaliana (Mouse-ear cress) protein is Glycine-rich cell wall structural protein.